A 188-amino-acid chain; its full sequence is UPF0461 protein C5orf24 (188 aa).

Residues 1-10 show a composition bias toward polar residues; the sequence is MMHPVASSNP. The disordered stretch occupies residues 1 to 20; sequence MMHPVASSNPAFCGPGKPSC. At Ser-37 the chain carries Phosphoserine. Residue Lys-75 forms a Glycyl lysine isopeptide (Lys-Gly) (interchain with G-Cter in SUMO2) linkage. Residues 79 to 142 are disordered; sequence KKKKNLNRSG…GYKVSPGRPP (64 aa). The span at 80–92 shows a compositional bias: basic residues; that stretch reads KKKNLNRSGKRGR. The span at 94–107 shows a compositional bias: polar residues; the sequence is SGTTKSAGYRTSTG. Phosphoserine is present on residues Ser-121 and Ser-180. Lys-184 is covalently cross-linked (Glycyl lysine isopeptide (Lys-Gly) (interchain with G-Cter in SUMO2)).

The protein belongs to the UPF0461 family.

The polypeptide is UPF0461 protein C5orf24 (C5orf24) (Homo sapiens (Human)).